The sequence spans 223 residues: MKIQYLGHSAFYVEAGEMKALIDPFIPETLTHPIFSFADITHIFITHGHGDHLGSTLSIVRESNATVITNYEISLYLQSKGVNCHSMHIGGRTTMDFGTVKMTPALHGSAIETDEGLVCGGNPGGFVIECQGKKLYHAGDTGLTMDMKLLAVEEIDVALLPIGGNFTMDVQDAVRAVAFIGAKVAIPMHYNTFPVITASPESFKEQVKTSQVHILNVEEVYNF.

The protein belongs to the UPF0173 family.

The protein is UPF0173 metal-dependent hydrolase Amet_4625 of Alkaliphilus metalliredigens (strain QYMF).